A 267-amino-acid polypeptide reads, in one-letter code: Translation initiation factor 2 subunit alpha (267 aa).

Positions 10 to 81 constitute an S1 motif domain; that stretch reads GELVVGKVDD…SAQQIDLSLK (72 aa).

Belongs to the eIF-2-alpha family. As to quaternary structure, heterotrimer composed of an alpha, a beta and a gamma chain.

Functionally, eIF-2 functions in the early steps of protein synthesis by forming a ternary complex with GTP and initiator tRNA. The protein is Translation initiation factor 2 subunit alpha of Halobacterium salinarum (strain ATCC 29341 / DSM 671 / R1).